Reading from the N-terminus, the 270-residue chain is Probable thioesterase BOA10 (270 aa).

This sequence belongs to the AMT4 thioesterase family.

It functions in the pathway polyketide biosynthesis. Functionally, probable thioesterase; part of the gene cluster B that mediates the biosynthesis of botcinic acid and its botcinin derivatives, acetate-derived polyketides that contribute to virulence when combined with the sesquiterpene botrydial. Botcinic acid and its derivatives have been shown to induce chlorosis and necrosis during host plant infection, but also have antifungal activities. Two polyketide synthases, BOA6 and BOA9, are involved in the biosynthesis of botcinins. BOA6 mediates the formation of the per-methylated tetraketide core by condensation of four units of malonyl-CoA with one unit of acetyl-CoA, which would be methylated in activated methylene groups to yield a bicyclic acid intermediate that could then either be converted to botrylactone derivatives or lose the starter acetate unit through a retro-Claisen type C-C bond cleavage to yield botcinin derivatives. The second polyketide synthase, BOA9, is probably required for the biosynthesis of the tetraketide side chain of botcinins. The methyltransferase (MT) domain within BOA6 is probably responsible for the incorporation of four methyl groups. The trans-enoyl reductase BOA5 might take over the enoyl reductase function of BOA6 that misses an ER domain. The monooxygenases BOA2, BOA3 and BOA4 might be involved in further hydroxylations at C4, C5 and C8, whereas BOA7, close to BOA9, could potentially be involved in the hydroxylation at C4 in the side chain of botcinins. This is Probable thioesterase BOA10 from Botryotinia fuckeliana (strain B05.10) (Noble rot fungus).